A 219-amino-acid chain; its full sequence is Ribosomal RNA small subunit methyltransferase G (219 aa).

S-adenosyl-L-methionine-binding positions include glycine 85, leucine 90, 136–137 (VE), and arginine 151.

It belongs to the methyltransferase superfamily. RNA methyltransferase RsmG family.

The protein resides in the cytoplasm. It carries out the reaction guanosine(527) in 16S rRNA + S-adenosyl-L-methionine = N(7)-methylguanosine(527) in 16S rRNA + S-adenosyl-L-homocysteine. Its function is as follows. Specifically methylates the N7 position of guanine in position 527 of 16S rRNA. This Cellvibrio japonicus (strain Ueda107) (Pseudomonas fluorescens subsp. cellulosa) protein is Ribosomal RNA small subunit methyltransferase G.